The sequence spans 264 residues: Phosphate import ATP-binding protein PstB (264 aa).

One can recognise an ABC transporter domain in the interval 11–250 (LKAEALSVYY…DTTEKIFDSP (240 aa)). Residue 43 to 50 (GPSGCGKS) coordinates ATP.

The protein belongs to the ABC transporter superfamily. Phosphate importer (TC 3.A.1.7) family. The complex is composed of two ATP-binding proteins (PstB), two transmembrane proteins (PstC and PstA) and a solute-binding protein (PstS).

It localises to the cell inner membrane. It catalyses the reaction phosphate(out) + ATP + H2O = ADP + 2 phosphate(in) + H(+). In terms of biological role, part of the ABC transporter complex PstSACB involved in phosphate import. Responsible for energy coupling to the transport system. The chain is Phosphate import ATP-binding protein PstB from Synechococcus sp. (strain ATCC 27144 / PCC 6301 / SAUG 1402/1) (Anacystis nidulans).